A 303-amino-acid chain; its full sequence is Glutathione transport system permease protein GsiD (303 aa).

6 helical membrane-spanning segments follow: residues Ala-40–Ile-60, Leu-105–Leu-125, Leu-144–Ile-164, Ala-165–Gly-185, Ile-222–Phe-242, and Val-266–Phe-286. One can recognise an ABC transmembrane type-1 domain in the interval Ala-101–Gly-290.

The protein belongs to the binding-protein-dependent transport system permease family. The complex is composed of two ATP-binding proteins (GsiA), two transmembrane proteins (GsiC and GsiD) and a solute-binding protein (GsiB).

It is found in the cell inner membrane. In terms of biological role, part of the ABC transporter complex GsiABCD involved in glutathione import. Probably responsible for the translocation of the substrate across the membrane. The sequence is that of Glutathione transport system permease protein GsiD from Escherichia coli O1:K1 / APEC.